We begin with the raw amino-acid sequence, 436 residues long: MALPTVAIVGRPNVGKSALFNRIAGERISIVEDVEGVTRDRIYTKAEWLNRQFSIIDTGGIDDVDAPFMEQIKHQADIAMTEADVIVFVVSAKEGITDADEYVAKILYRTHKPVILAVNKVDNPEMRSAIYDFYALGLGDPYPVSSAHGIGTGDVLDAIVDNLPTEAQEESSDIIKFSLIGRPNVGKSSLINAILGEDRVIASPVAGTTRDAIDTTFTDEEGQEFTMIDTAGMRKSGKVYENTEKYSVMRAMRAIDRSDIVLMVLNAEEGIREYDKRIAGFAHEAGKGIVVVVNKWDAIKKDNRTVAQWEADIRDNFQYIPYAPIVFVSAVTKQRLHKLPDVIKQVSQSQNTRIPSAVLNDVVMDAVAINPTPTDKGKRLKIFYATQVSVKPPTFVIFVNEEELMHFSYLRFLENQIRQAFVFEGTPIRLIARKRK.

2 EngA-type G domains span residues 4–167 (PTVA…PTEA) and 175–351 (IKFS…QSQN). GTP is bound by residues 10-17 (GRPNVGKS), 57-61 (DTGGI), 119-122 (NKVD), 181-188 (GRPNVGKS), 229-233 (DTAGM), and 294-297 (NKWD). One can recognise a KH-like domain in the interval 352–436 (TRIPSAVLND…PIRLIARKRK (85 aa)).

It belongs to the TRAFAC class TrmE-Era-EngA-EngB-Septin-like GTPase superfamily. EngA (Der) GTPase family. In terms of assembly, associates with the 50S ribosomal subunit.

Its function is as follows. GTPase that plays an essential role in the late steps of ribosome biogenesis. The chain is GTPase Der from Streptococcus mutans serotype c (strain ATCC 700610 / UA159).